The following is a 593-amino-acid chain: Probable E3 ubiquitin-protein ligase ARI2 (593 aa).

Residues 120-334 (SMMSCDICVE…ISGHSCGRFQ (215 aa)) form a TRIAD supradomain region. The Zn(2+) site is built by Cys-124, Cys-127, Cys-141, His-143, Cys-146, Cys-149, Cys-168, Cys-173, Cys-215, Cys-221, Cys-237, Cys-239, Cys-244, Cys-247, His-252, Cys-257, Cys-284, and Cys-287. The RING-type 1 zinc finger occupies 124–173 (CDICVEDVPGYQLTRMDCGHSFCNNCWTGHFTVKINEGQSKRIICMAHKC). The IBR-type zinc-finger motif lies at 195–257 (EKFDRFLLES…SSQAHSPCSC (63 aa)). The RING-type 2; atypical zinc-finger motif lies at 284-312 (CPKCHKPVEKNGGCNLVTCLCRQSFCWLC). Cys-297 is a catalytic residue. Cys-302, Cys-304, Cys-309, Cys-312, His-320, and Cys-330 together coordinate Zn(2+).

This sequence belongs to the RBR family. Ariadne subfamily. It depends on Zn(2+) as a cofactor. In terms of tissue distribution, ubiquitous.

The catalysed reaction is [E2 ubiquitin-conjugating enzyme]-S-ubiquitinyl-L-cysteine + [acceptor protein]-L-lysine = [E2 ubiquitin-conjugating enzyme]-L-cysteine + [acceptor protein]-N(6)-ubiquitinyl-L-lysine.. It functions in the pathway protein modification; protein ubiquitination. Might act as an E3 ubiquitin-protein ligase, or as part of E3 complex, which accepts ubiquitin from specific E2 ubiquitin-conjugating enzymes and then transfers it to substrates. This Arabidopsis thaliana (Mouse-ear cress) protein is Probable E3 ubiquitin-protein ligase ARI2 (ARI2).